We begin with the raw amino-acid sequence, 427 residues long: Dihydroorotase (427 aa).

Zn(2+)-binding residues include His-58 and His-60. Residues 60–62 (HLR) and Asn-92 each bind substrate. Residues Asp-150, His-177, and His-230 each coordinate Zn(2+). A substrate-binding site is contributed by Asn-276. Asp-303 serves as a coordination point for Zn(2+). The active site involves Asp-303. Residues His-307 and 321 to 322 (FG) contribute to the substrate site.

Belongs to the metallo-dependent hydrolases superfamily. DHOase family. Class I DHOase subfamily. It depends on Zn(2+) as a cofactor.

It carries out the reaction (S)-dihydroorotate + H2O = N-carbamoyl-L-aspartate + H(+). It functions in the pathway pyrimidine metabolism; UMP biosynthesis via de novo pathway; (S)-dihydroorotate from bicarbonate: step 3/3. Catalyzes the reversible cyclization of carbamoyl aspartate to dihydroorotate. This is Dihydroorotase from Macrococcus caseolyticus (strain JCSC5402) (Macrococcoides caseolyticum).